The chain runs to 149 residues: D-aminoacyl-tRNA deacylase (149 aa).

A Gly-cisPro motif, important for rejection of L-amino acids motif is present at residues 137-138 (GP).

This sequence belongs to the DTD family. As to quaternary structure, homodimer.

It localises to the cytoplasm. The catalysed reaction is glycyl-tRNA(Ala) + H2O = tRNA(Ala) + glycine + H(+). It carries out the reaction a D-aminoacyl-tRNA + H2O = a tRNA + a D-alpha-amino acid + H(+). Functionally, an aminoacyl-tRNA editing enzyme that deacylates mischarged D-aminoacyl-tRNAs. Also deacylates mischarged glycyl-tRNA(Ala), protecting cells against glycine mischarging by AlaRS. Acts via tRNA-based rather than protein-based catalysis; rejects L-amino acids rather than detecting D-amino acids in the active site. By recycling D-aminoacyl-tRNA to D-amino acids and free tRNA molecules, this enzyme counteracts the toxicity associated with the formation of D-aminoacyl-tRNA entities in vivo and helps enforce protein L-homochirality. This chain is D-aminoacyl-tRNA deacylase, found in Thermoanaerobacter pseudethanolicus (strain ATCC 33223 / 39E) (Clostridium thermohydrosulfuricum).